The following is a 583-amino-acid chain: Complement factor I (583 aa).

The signal sequence occupies residues 1-18 (MKLLHVFLLFLCFHLRFC). Disulfide bonds link cysteine 33/cysteine 255, cysteine 43/cysteine 54, cysteine 48/cysteine 59, cysteine 61/cysteine 93, cysteine 67/cysteine 86, cysteine 75/cysteine 106, cysteine 141/cysteine 181, cysteine 154/cysteine 214, cysteine 186/cysteine 196, cysteine 229/cysteine 247, cysteine 241/cysteine 256, cysteine 259/cysteine 271, cysteine 266/cysteine 284, cysteine 278/cysteine 293, cysteine 327/cysteine 453, cysteine 365/cysteine 381, and cysteine 373/cysteine 444. Positions 55–108 (IEGTCVCKLPYQCPKNGTAVCATNRRSFPTYCQQKSLECLHPGTKFLNNGTCTA) constitute a Kazal-like domain. Asparagine 70 carries N-linked (GlcNAc...) asparagine glycosylation. An N-linked (GlcNAc...) (complex) asparagine glycan is attached at asparagine 103. Positions 114 to 212 (VSLKHGNTDS…TMGYQDFADV (99 aa)) constitute an SRCR domain. Asparagine 177 carries N-linked (GlcNAc...) asparagine glycosylation. LDL-receptor class A domains follow at residues 213–257 (VCYT…LCCK) and 258–294 (ACQG…VGCA). Lysine 239, aspartate 242, isoleucine 244, aspartate 246, aspartate 252, and glutamate 253 together coordinate Ca(2+). Positions 276, 279, 281, 283, 289, and 290 each coordinate Ca(2+). The region spanning 340 to 574 (IVGGKRAQLG…YFDWISYHVG (235 aa)) is the Peptidase S1 domain. Active-site charge relay system residues include histidine 380 and aspartate 429. N-linked (GlcNAc...) asparagine glycans are attached at residues asparagine 464 and asparagine 494. 3 disulfides stabilise this stretch: cysteine 467–cysteine 531, cysteine 495–cysteine 510, and cysteine 521–cysteine 550. The Charge relay system role is filled by serine 525. Residue asparagine 536 is glycosylated (N-linked (GlcNAc...) asparagine).

It belongs to the peptidase S1 family. In terms of assembly, heterodimer of a light and heavy chains; disulfide-linked. The fully processed and mature protein circulates as a zymogen, and is allosterically activated by substrate-induced remodeling of the active site. Interacts with C3b. Interacts with complement factor H. As to quaternary structure, (Microbial infection) Interacts with Staphylococcus aureus clumping factor A/ClfA; this interaction enhances cleavage of C3b into iC3b by CFI. Expressed in the liver by hepatocytes. Also present in other cells such as monocytes, fibroblasts or keratinocytes.

It localises to the secreted. The protein resides in the extracellular space. It carries out the reaction Inactivates complement subcomponents C3b, iC3b and C4b by proteolytic cleavage.. Trypsin-like serine protease that plays an essential role in regulating the immune response by controlling all complement pathways. Inhibits these pathways by cleaving three peptide bonds in the alpha-chain of C3b and two bonds in the alpha-chain of C4b thereby inactivating these proteins. Essential cofactors for these reactions include factor H and C4BP in the fluid phase and membrane cofactor protein/CD46 and CR1 on cell surfaces. The presence of these cofactors on healthy cells allows degradation of deposited C3b by CFI in order to prevent undesired complement activation, while in apoptotic cells or microbes, the absence of such cofactors leads to C3b-mediated complement activation and subsequent opsonization. The sequence is that of Complement factor I (CFI) from Homo sapiens (Human).